The following is a 136-amino-acid chain: Globin CTP-III (136 aa).

The Globin domain occupies 1–136 (LSADQISTVQ…TFFGMIFSKM (136 aa)). Heme b is bound at residue His-87.

This sequence belongs to the globin family. In terms of assembly, monomer.

The sequence is that of Globin CTP-III from Chironomus thummi piger (Midge).